Here is a 75-residue protein sequence, read N- to C-terminus: MFTMKKSLLFLFFLGTISLSFCEGERSADEDDEGEMTEEEKRSIRDKGKTIAIDLAKSAGTGVLKTLMCKLDKSC.

Positions 1-24 (MFTMKKSLLFLFFLGTISLSFCEG) are cleaved as a signal peptide. A propeptide spanning residues 25-40 (ERSADEDDEGEMTEEE) is cleaved from the precursor.

Expressed by the skin glands.

The protein resides in the secreted. In terms of biological role, has antimicrobial activity against Gram-positive bacteria S.aureus ATCC 2592 (MIC=10.0 uM), S.aureus ATCC 43300 (MIC=10.0 uM) and B.subtilis (MIC=30.0 uM), against Gram-negative bacteria E.coli ML-35P (MIC=10.0 uM), P.aeruginosa PA01 (MIC=2.5 uM) and P.aeruginosa ATCC 27853 (MIC=2.5 uM) and against fungus C.albicans ATCC 2002 (MIC=10.0 uM). In Limnonectes kuhlii (Kuhl's Creek frog), this protein is Rugosin-LK2.